We begin with the raw amino-acid sequence, 90 residues long: Small ribosomal subunit protein bS6 (90 aa).

An Isoglutamyl lysine isopeptide (Lys-Gln) (interchain with Q-Cter in protein Pup) cross-link involves residue lysine 33.

Belongs to the bacterial ribosomal protein bS6 family.

Its function is as follows. Binds together with bS18 to 16S ribosomal RNA. The chain is Small ribosomal subunit protein bS6 (rpsF) from Mycolicibacterium smegmatis (strain ATCC 700084 / mc(2)155) (Mycobacterium smegmatis).